Consider the following 374-residue polypeptide: Succinyl-diaminopimelate desuccinylase (374 aa).

His-66 provides a ligand contact to Zn(2+). Residue Asp-68 is part of the active site. Asp-99 is a Zn(2+) binding site. Glu-133 acts as the Proton acceptor in catalysis. Residues Glu-134, Glu-162, and His-348 each coordinate Zn(2+).

The protein belongs to the peptidase M20A family. DapE subfamily. Homodimer. Zn(2+) is required as a cofactor. Co(2+) serves as cofactor.

It catalyses the reaction N-succinyl-(2S,6S)-2,6-diaminopimelate + H2O = (2S,6S)-2,6-diaminopimelate + succinate. Its pathway is amino-acid biosynthesis; L-lysine biosynthesis via DAP pathway; LL-2,6-diaminopimelate from (S)-tetrahydrodipicolinate (succinylase route): step 3/3. In terms of biological role, catalyzes the hydrolysis of N-succinyl-L,L-diaminopimelic acid (SDAP), forming succinate and LL-2,6-diaminopimelate (DAP), an intermediate involved in the bacterial biosynthesis of lysine and meso-diaminopimelic acid, an essential component of bacterial cell walls. The protein is Succinyl-diaminopimelate desuccinylase of Coxiella burnetii (strain RSA 331 / Henzerling II).